A 520-amino-acid polypeptide reads, in one-letter code: Ribonuclease Y (520 aa).

A helical transmembrane segment spans residues 5–25 (ITIISSLLFLIVGLVVGSLIF). The tract at residues 76–127 (ELRGRRTETQKAENRLLQREENLDRKDTSLSKREATLERKEESISKRQQQIE) is disordered. The 64-residue stretch at 210–273 (TVSVVTLPND…EIARIALEKL (64 aa)) folds into the KH domain. In terms of domain architecture, HD spans 336-429 (VLNHSLEVSK…VAAADALSAA (94 aa)).

Belongs to the RNase Y family.

Its subcellular location is the cell membrane. In terms of biological role, endoribonuclease that initiates mRNA decay. In Listeria monocytogenes serotype 1/2a (strain 10403S), this protein is Ribonuclease Y.